The chain runs to 146 residues: Cyanate hydratase (146 aa).

Catalysis depends on residues Arg-87, Glu-90, and Ser-113.

Belongs to the cyanase family.

The enzyme catalyses cyanate + hydrogencarbonate + 3 H(+) = NH4(+) + 2 CO2. Its function is as follows. Catalyzes the reaction of cyanate with bicarbonate to produce ammonia and carbon dioxide. The sequence is that of Cyanate hydratase from Marinomonas sp. (strain MWYL1).